The chain runs to 211 residues: Ribosomal RNA small subunit methyltransferase G (211 aa).

S-adenosyl-L-methionine-binding positions include G74, L79, 125–126, and R140; that span reads AE.

Belongs to the methyltransferase superfamily. RNA methyltransferase RsmG family.

Its subcellular location is the cytoplasm. In terms of biological role, specifically methylates the N7 position of guanine in position 518 of 16S rRNA. This chain is Ribosomal RNA small subunit methyltransferase G, found in Clavibacter sepedonicus (Clavibacter michiganensis subsp. sepedonicus).